The sequence spans 305 residues: Acetaldehyde dehydrogenase (305 aa).

Residue C130 is the Acyl-thioester intermediate of the active site. Residues 161-169 and N272 each bind NAD(+); that span reads SVGPGTRKN.

Belongs to the acetaldehyde dehydrogenase family.

It carries out the reaction acetaldehyde + NAD(+) + CoA = acetyl-CoA + NADH + H(+). The chain is Acetaldehyde dehydrogenase from Leptothrix cholodnii (strain ATCC 51168 / LMG 8142 / SP-6) (Leptothrix discophora (strain SP-6)).